We begin with the raw amino-acid sequence, 272 residues long: Phosphatidylglycerol--prolipoprotein diacylglyceryl transferase (272 aa).

4 consecutive transmembrane segments (helical) span residues 15–35 (LGPLYVHMYSVFMLAGALVLF), 53–73 (AFAVTSLLIPVILGARLWHVV), 90–110 (IWEGGLGFIGGVFSGLICFFV), and 117–137 (VPPFTFLDALAPGILAALCFA). Arginine 138 is a binding site for a 1,2-diacyl-sn-glycero-3-phospho-(1'-sn-glycerol). The next 3 membrane-spanning stretches (helical) occupy residues 174-194 (FHPIFLYEIILNVFIIVILLV), 199-219 (VFVKTVFPKGSVFAAFLVLYG), and 237-257 (FGLDLNYVGAAAMIIVGVLIA).

Belongs to the Lgt family.

It localises to the cell membrane. The enzyme catalyses L-cysteinyl-[prolipoprotein] + a 1,2-diacyl-sn-glycero-3-phospho-(1'-sn-glycerol) = an S-1,2-diacyl-sn-glyceryl-L-cysteinyl-[prolipoprotein] + sn-glycerol 1-phosphate + H(+). Its pathway is protein modification; lipoprotein biosynthesis (diacylglyceryl transfer). Functionally, catalyzes the transfer of the diacylglyceryl group from phosphatidylglycerol to the sulfhydryl group of the N-terminal cysteine of a prolipoprotein, the first step in the formation of mature lipoproteins. The protein is Phosphatidylglycerol--prolipoprotein diacylglyceryl transferase of Tropheryma whipplei (strain Twist) (Whipple's bacillus).